A 267-amino-acid polypeptide reads, in one-letter code: Ribosomal RNA small subunit methyltransferase A (267 aa).

Residues Asn18, Leu20, Gly45, Glu66, Asp91, and Asn112 each coordinate S-adenosyl-L-methionine.

This sequence belongs to the class I-like SAM-binding methyltransferase superfamily. rRNA adenine N(6)-methyltransferase family. RsmA subfamily.

It is found in the cytoplasm. The enzyme catalyses adenosine(1518)/adenosine(1519) in 16S rRNA + 4 S-adenosyl-L-methionine = N(6)-dimethyladenosine(1518)/N(6)-dimethyladenosine(1519) in 16S rRNA + 4 S-adenosyl-L-homocysteine + 4 H(+). Its function is as follows. Specifically dimethylates two adjacent adenosines (A1518 and A1519) in the loop of a conserved hairpin near the 3'-end of 16S rRNA in the 30S particle. May play a critical role in biogenesis of 30S subunits. This chain is Ribosomal RNA small subunit methyltransferase A, found in Shewanella woodyi (strain ATCC 51908 / MS32).